The primary structure comprises 238 residues: Probable metal transport system ATP-binding protein TP_0035 (238 aa).

In terms of domain architecture, ABC transporter spans 10 to 231 (VLLQNVSFRY…LDMQKKDALA (222 aa)). 44-51 (GENGSGKS) is an ATP binding site.

The protein belongs to the ABC transporter superfamily.

It localises to the cell inner membrane. Its function is as follows. Part of an ATP-driven transport system TP_0034/TP_0035/TP_0036 for a metal. Probably responsible for energy coupling to the transport system. This Treponema pallidum (strain Nichols) protein is Probable metal transport system ATP-binding protein TP_0035.